Consider the following 207-residue polypeptide: Octanoyltransferase (207 aa).

The 176-residue stretch at 29–204 (DDTADELWLV…ELMVQLGDEE (176 aa)) folds into the BPL/LPL catalytic domain. Residues 68-75 (RGGQVTYH), 135-137 (SLG), and 148-150 (GVA) contribute to the substrate site. Residue C166 is the Acyl-thioester intermediate of the active site.

It belongs to the LipB family.

Its subcellular location is the cytoplasm. The enzyme catalyses octanoyl-[ACP] + L-lysyl-[protein] = N(6)-octanoyl-L-lysyl-[protein] + holo-[ACP] + H(+). Its pathway is protein modification; protein lipoylation via endogenous pathway; protein N(6)-(lipoyl)lysine from octanoyl-[acyl-carrier-protein]: step 1/2. Catalyzes the transfer of endogenously produced octanoic acid from octanoyl-acyl-carrier-protein onto the lipoyl domains of lipoate-dependent enzymes. Lipoyl-ACP can also act as a substrate although octanoyl-ACP is likely to be the physiological substrate. The protein is Octanoyltransferase of Methylococcus capsulatus (strain ATCC 33009 / NCIMB 11132 / Bath).